The sequence spans 195 residues: Small ribosomal subunit protein eS7 (195 aa).

Phosphothreonine is present on residues T146 and T151. A phosphoserine mark is found at S172 and S173.

This sequence belongs to the eukaryotic ribosomal protein eS7 family. Component of the small ribosomal subunit (SSU). Mature yeast ribosomes consist of a small (40S) and a large (60S) subunit. The 40S small subunit contains 1 molecule of ribosomal RNA (18S rRNA) and at least 33 different proteins. The large 60S subunit contains 3 rRNA molecules (25S, 5.8S and 5S rRNA) and at least 46 different proteins. Interacts with snoRNA U3. uS11 interacts with MPP10. Component of the ribosomal small subunit (SSU) processome composed of at least 40 protein subunits and snoRNA U3.

It localises to the cytoplasm. The protein localises to the nucleus. It is found in the nucleolus. Functionally, component of the ribosome, a large ribonucleoprotein complex responsible for the synthesis of proteins in the cell. The small ribosomal subunit (SSU) binds messenger RNAs (mRNAs) and translates the encoded message by selecting cognate aminoacyl-transfer RNA (tRNA) molecules. The large subunit (LSU) contains the ribosomal catalytic site termed the peptidyl transferase center (PTC), which catalyzes the formation of peptide bonds, thereby polymerizing the amino acids delivered by tRNAs into a polypeptide chain. The nascent polypeptides leave the ribosome through a tunnel in the LSU and interact with protein factors that function in enzymatic processing, targeting, and the membrane insertion of nascent chains at the exit of the ribosomal tunnel. eS7 is involved in nucleolar processing of pre-18S ribosomal RNA and ribosome assembly. The polypeptide is Small ribosomal subunit protein eS7 (rps7) (Schizosaccharomyces pombe (strain 972 / ATCC 24843) (Fission yeast)).